A 451-amino-acid polypeptide reads, in one-letter code: Trigger factor (451 aa).

Positions aspartate 165–leucine 250 constitute a PPIase FKBP-type domain.

It belongs to the FKBP-type PPIase family. Tig subfamily.

The protein resides in the cytoplasm. It carries out the reaction [protein]-peptidylproline (omega=180) = [protein]-peptidylproline (omega=0). In terms of biological role, involved in protein export. Acts as a chaperone by maintaining the newly synthesized protein in an open conformation. Functions as a peptidyl-prolyl cis-trans isomerase. The sequence is that of Trigger factor from Helicobacter pylori (strain G27).